The sequence spans 807 residues: 1-phosphatidylinositol 4,5-bisphosphate phosphodiesterase delta-4 (807 aa).

The 109-residue stretch at 16 to 124 (LLMQEGTMMR…WMRGLQLLVD (109 aa)) folds into the PH domain. A substrate binding region spans residues 26–53 (KVRTKSWKKLRYFRLQNDGMTVWHGSQP). 3 EF-hand domains span residues 134–169 (QMDQ…MNVE), 170–205 (MDEE…LTKR), and 203–237 (TKRT…EQKE). The Ca(2+) site is built by Asp-147, Asn-149, Asp-151, Arg-153, Glu-158, Asp-183, Ser-187, Asp-189, and Glu-194. Residues 213–243 (EDFSSDKQKLTLLEFVDFLRKEQKEKDHAPD) carry the GBA motif. Positions 290-435 (QDMTQPLSHY…LRGKILVKGK (146 aa)) constitute a PI-PLC X-box domain. His-305 is a catalytic residue. Ca(2+)-binding residues include Asn-306, Glu-335, and Asp-337. His-350 is an active-site residue. Glu-384 lines the Ca(2+) pocket. 2 residues coordinate substrate: Lys-433 and Lys-435. The interval 442 to 490 (VDKEEEEEEEEEELEKDEGPDLDPASPELDTQPQPETQGQAAGNKKERK) is disordered. Residues 443 to 462 (DKEEEEEEEEEELEKDEGPD) show a composition bias toward acidic residues. A compositionally biased stretch (polar residues) spans 470–482 (LDTQPQPETQGQA). Residues 538-654 (LSALVVYLRT…GYVLKPEFLR (117 aa)) form the PI-PLC Y-box domain. 2 residues coordinate substrate: Ser-567 and Arg-594. Positions 654–781 (RDTQSSFNPE…QGYRHVSLLS (128 aa)) constitute a C2 domain. Residues Asp-697, Asn-721, Asp-750, and Tyr-751 each coordinate Ca(2+). A PDZ-binding motif is present at residues 776 to 779 (HVSL).

As to quaternary structure, interacts with GRIP1. Interacts (via GBA motif) with guanine nucleotide-binding protein G(i) alpha subunit GNAI3 (inactive GDP-bound form)l low-affinity interaction. It depends on Ca(2+) as a cofactor.

It is found in the membrane. The protein localises to the nucleus. The protein resides in the cytoplasm. Its subcellular location is the endoplasmic reticulum. It catalyses the reaction a 1,2-diacyl-sn-glycero-3-phospho-(1D-myo-inositol-4,5-bisphosphate) + H2O = 1D-myo-inositol 1,4,5-trisphosphate + a 1,2-diacyl-sn-glycerol + H(+). The enzyme catalyses a 1,2-diacyl-sn-glycero-3-phospho-(1D-myo-inositol) + H2O = 1D-myo-inositol 1-phosphate + a 1,2-diacyl-sn-glycerol + H(+). In terms of biological role, hydrolyzes the phosphatidylinositol 4,5-bisphosphate (PIP2) to generate 2 second messenger molecules diacylglycerol (DAG) and inositol 1,4,5-trisphosphate (IP3). DAG mediates the activation of protein kinase C (PKC), while IP3 releases Ca(2+) from intracellular stores. Required for acrosome reaction in sperm during fertilization, probably by acting as an important enzyme for intracellular Ca(2+) mobilization in the zona pellucida-induced acrosome reaction. May play a role in cell growth. Modulates the liver regeneration in cooperation with nuclear PKC. Overexpression up-regulates the Erk signaling pathway and proliferation. The polypeptide is 1-phosphatidylinositol 4,5-bisphosphate phosphodiesterase delta-4 (Mus musculus (Mouse)).